The chain runs to 433 residues: Serine--tRNA ligase (433 aa).

235–237 (TSE) contributes to the L-serine binding site. Position 266-268 (266-268 (RSE)) interacts with ATP. Glutamate 289 provides a ligand contact to L-serine. 353 to 356 (EISS) contributes to the ATP binding site. L-serine is bound at residue serine 388.

This sequence belongs to the class-II aminoacyl-tRNA synthetase family. Type-1 seryl-tRNA synthetase subfamily. As to quaternary structure, homodimer. The tRNA molecule binds across the dimer.

Its subcellular location is the cytoplasm. It carries out the reaction tRNA(Ser) + L-serine + ATP = L-seryl-tRNA(Ser) + AMP + diphosphate + H(+). The catalysed reaction is tRNA(Sec) + L-serine + ATP = L-seryl-tRNA(Sec) + AMP + diphosphate + H(+). The protein operates within aminoacyl-tRNA biosynthesis; selenocysteinyl-tRNA(Sec) biosynthesis; L-seryl-tRNA(Sec) from L-serine and tRNA(Sec): step 1/1. Its function is as follows. Catalyzes the attachment of serine to tRNA(Ser). Is also able to aminoacylate tRNA(Sec) with serine, to form the misacylated tRNA L-seryl-tRNA(Sec), which will be further converted into selenocysteinyl-tRNA(Sec). In Burkholderia pseudomallei (strain 668), this protein is Serine--tRNA ligase.